The primary structure comprises 342 residues: Arginase 1, mitochondrial (342 aa).

A mitochondrion-targeting transit peptide spans 1–22 (MSRIIGRKGINYIHRLNSASFT). L-ornithine is bound by residues serine 77 and 96 to 99 (GSTN). Mn(2+)-binding residues include histidine 161, aspartate 185, histidine 187, and aspartate 189. Residue 189–191 (DIY) coordinates L-ornithine. 195–197 (EGN) contacts substrate. An L-ornithine-binding site is contributed by serine 224. Mn(2+) is bound by residues aspartate 270 and aspartate 272. Glutamate 313 is a binding site for substrate.

This sequence belongs to the arginase family. Forms homohexamers. Mn(2+) is required as a cofactor. As to expression, expressed in vasculature of roots, root tips, cotyledons, leaves, cauline leaves, stems, sepals and pollen.

The protein resides in the mitochondrion. The enzyme catalyses L-arginine + H2O = urea + L-ornithine. It catalyses the reaction agmatine + H2O = urea + putrescine. It participates in nitrogen metabolism; urea cycle; L-ornithine and urea from L-arginine: step 1/1. The protein operates within amine and polyamine biosynthesis; putrescine biosynthesis via agmatine pathway; putrescine from agmatine: step 1/1. Catalyzes the hydrolysis of L-arginine to urea and L-ornithine. The latter can be utilized in the urea cycle or as a precursor for the synthesis of both polyamines and proline. Possesses agmatinase activity. Catalyzes the formation of putrescine from agmatine. This Arabidopsis thaliana (Mouse-ear cress) protein is Arginase 1, mitochondrial.